Consider the following 375-residue polypeptide: 23S rRNA (uracil(747)-C(5))-methyltransferase RlmC (375 aa).

The [4Fe-4S] cluster site is built by Cys-3, Cys-11, Cys-14, and Cys-87. Positions 212, 241, 262, and 307 each coordinate S-adenosyl-L-methionine. Cys-334 functions as the Nucleophile in the catalytic mechanism.

The protein belongs to the class I-like SAM-binding methyltransferase superfamily. RNA M5U methyltransferase family. RlmC subfamily.

The catalysed reaction is uridine(747) in 23S rRNA + S-adenosyl-L-methionine = 5-methyluridine(747) in 23S rRNA + S-adenosyl-L-homocysteine + H(+). Catalyzes the formation of 5-methyl-uridine at position 747 (m5U747) in 23S rRNA. This Escherichia coli (strain SMS-3-5 / SECEC) protein is 23S rRNA (uracil(747)-C(5))-methyltransferase RlmC.